A 179-amino-acid chain; its full sequence is MSRIGKRLINIPSQVTVSIKDQVFSVKGPKGELSKQIPYGIQVVQQNDHLVVERVAESLLARKLHGLCRTLVSNLVQGVFQGFERRLEIQGVGYRAQMDGKKLVLNIGFSHPVVIEPPTEIQLQVENNTNIIIKGIDKELVGKLAAEIRAVRPPEPYKGKGIRYLGENVKRKVGKAGKK.

This sequence belongs to the universal ribosomal protein uL6 family. In terms of assembly, part of the 50S ribosomal subunit.

It is found in the plastid. It localises to the cyanelle. Functionally, binds 23S rRNA. The polypeptide is Large ribosomal subunit protein uL6c (rpl6) (Cyanophora paradoxa).